The primary structure comprises 96 residues: Cystatin (96 aa).

A Cystatin domain is found at 22-65; sequence DFIKAALNETGTHAGRKYKVLRSSQQVVAGMKYTFYIVFEDDES. The N-linked (GlcNAc...) asparagine glycan is linked to Asn29.

The protein belongs to the cystatin family. Interacts with cathepsin L-like peptidase; the interaction results in inhibition of cathepsin L-like peptidase activity. In terms of tissue distribution, salivary gland. Midgut.

Cysteine proteinase inhibitor. Inhibits cathepsin L-like peptidase. Increases cell viability following apoptosis induction by staurosporine. Inhibits human cathepsin S (CTSS), human cathepsin L2 (CTSV), human cathepsin L (CTSL), human cathepsin B (CTSB) and papain. In terms of biological role, (Microbial infection) Modulates dengue virus type 2 replication in salivary glands. The protein is Cystatin of Aedes aegypti (Yellowfever mosquito).